A 155-amino-acid polypeptide reads, in one-letter code: UPF0225 protein PC1_1977 (155 aa).

Belongs to the UPF0225 family.

The sequence is that of UPF0225 protein PC1_1977 from Pectobacterium carotovorum subsp. carotovorum (strain PC1).